A 458-amino-acid chain; its full sequence is Phosphomethylpyrimidine synthase (458 aa).

Substrate is bound by residues asparagine 80, methionine 109, tyrosine 139, histidine 175, 195 to 197, 236 to 239, and glutamate 275; these read SRG and DSLR. Residue histidine 279 coordinates Zn(2+). Tyrosine 302 is a substrate binding site. Histidine 343 lines the Zn(2+) pocket. Cysteine 423, cysteine 426, and cysteine 431 together coordinate [4Fe-4S] cluster.

This sequence belongs to the ThiC family. [4Fe-4S] cluster is required as a cofactor.

It carries out the reaction 5-amino-1-(5-phospho-beta-D-ribosyl)imidazole + S-adenosyl-L-methionine = 4-amino-2-methyl-5-(phosphooxymethyl)pyrimidine + CO + 5'-deoxyadenosine + formate + L-methionine + 3 H(+). It functions in the pathway cofactor biosynthesis; thiamine diphosphate biosynthesis. In terms of biological role, catalyzes the synthesis of the hydroxymethylpyrimidine phosphate (HMP-P) moiety of thiamine from aminoimidazole ribotide (AIR) in a radical S-adenosyl-L-methionine (SAM)-dependent reaction. This is Phosphomethylpyrimidine synthase from Cyanothece sp. (strain PCC 7425 / ATCC 29141).